The following is a 231-amino-acid chain: Large ribosomal subunit protein uL1 (231 aa).

It belongs to the universal ribosomal protein uL1 family. As to quaternary structure, part of the 50S ribosomal subunit.

Functionally, binds directly to 23S rRNA. The L1 stalk is quite mobile in the ribosome, and is involved in E site tRNA release. Its function is as follows. Protein L1 is also a translational repressor protein, it controls the translation of the L11 operon by binding to its mRNA. In Legionella pneumophila (strain Paris), this protein is Large ribosomal subunit protein uL1.